We begin with the raw amino-acid sequence, 118 residues long: Holo-[acyl-carrier-protein] synthase (118 aa).

Positions 6 and 55 each coordinate Mg(2+).

The protein belongs to the P-Pant transferase superfamily. AcpS family. It depends on Mg(2+) as a cofactor.

Its subcellular location is the cytoplasm. The catalysed reaction is apo-[ACP] + CoA = holo-[ACP] + adenosine 3',5'-bisphosphate + H(+). In terms of biological role, transfers the 4'-phosphopantetheine moiety from coenzyme A to a Ser of acyl-carrier-protein. The polypeptide is Holo-[acyl-carrier-protein] synthase (Chlorobium chlorochromatii (strain CaD3)).